Consider the following 180-residue polypeptide: Ribulose bisphosphate carboxylase small subunit, chloroplastic 3 (180 aa).

The transit peptide at 1 to 56 (MASSVMSSAAVATRGNGAQASMVAPFTGLKSTASFPVSRKQNLDITSIASNGGRVS) directs the protein to the chloroplast.

This sequence belongs to the RuBisCO small chain family. Heterohexadecamer of 8 large and 8 small subunits. As to quaternary structure, (Microbial infection) Binds to tobamovirus movement protein; this interaction seems required for viral systemic movement.

The protein localises to the plastid. It is found in the chloroplast. It localises to the cell junction. The protein resides in the plasmodesma. RuBisCO catalyzes two reactions: the carboxylation of D-ribulose 1,5-bisphosphate, the primary event in carbon dioxide fixation, as well as the oxidative fragmentation of the pentose substrate. Both reactions occur simultaneously and in competition at the same active site. Although the small subunit is not catalytic it is essential for maximal activity. Involved in antiviral defenses. This chain is Ribulose bisphosphate carboxylase small subunit, chloroplastic 3, found in Solanum lycopersicum (Tomato).